The following is a 957-amino-acid chain: Melanoma-associated antigen E1 (957 aa).

Positions 1-433 (MSLVSQNSRR…RNPSKCSIVL (433 aa)) are disordered. Composition is skewed to polar residues over residues 85–96 (SEASSASGQPTV) and 104–130 (LLAT…SVTL). The segment covering 138–156 (TSRPPTSSEEPSTSVPATP) has biased composition (low complexity). 6 stretches are compositionally biased toward polar residues: residues 158-177 (EGTS…TSVV), 220-232 (LSTS…TEGL), 256-306 (RSTT…GPST), 328-344 (LSTS…STSV), 364-380 (RSTS…DTSV), and 414-428 (TLFS…NPSK). MAGE domains are found at residues 491 to 690 (MEQN…YNEA) and 745 to 936 (LESK…YREA). Residues 743 to 957 (SRLESKARKL…HRQFFVHNFR (215 aa)) form an interaction with DTNA region.

As to quaternary structure, interacts with DTNA. Interacts with TRIM28.

It localises to the cytoplasm. The protein localises to the perinuclear region. Its subcellular location is the nucleus. The protein resides in the cell membrane. Its function is as follows. May enhance ubiquitin ligase activity of RING-type zinc finger-containing E3 ubiquitin-protein ligases. Proposed to act through recruitment and/or stabilization of the Ubl-conjugating enzyme (E2) at the E3:substrate complex. This Macaca fascicularis (Crab-eating macaque) protein is Melanoma-associated antigen E1 (MAGEE1).